We begin with the raw amino-acid sequence, 74 residues long: Serine rich endogenous peptide 23 (74 aa).

The first 25 residues, 1–25, serve as a signal peptide directing secretion; that stretch reads MNKVVVYVLALSILLFFGLPNTTLA. The short motif at 52-66 is the SCOOP motif element; sequence KIAVGGSDSVRAHSK. The SxS motif essential for MIK2 binding signature appears at 58–60; the sequence is SDS.

It belongs to the serine rich endogenous peptide (SCOOP) phytocytokine family. Interacts with MIK2 (via extracellular leucine-rich repeat domain); this interaction triggers the formation of complex between MIK2 and the BAK1/SERK3 and SERK4 coreceptors, and subsequent BAK1 activation by phosphorylation. Mostly expressed in roots, and, to a lower extent, in seedlings shoots.

The protein localises to the cell membrane. Its subcellular location is the secreted. It localises to the extracellular space. The protein resides in the apoplast. Brassicaceae-specific phytocytokine (plant endogenous peptide released into the apoplast) perceived by MIK2 in a BAK1/SERK3 and SERK4 coreceptors-dependent manner, that modulates various physiological and antimicrobial processes including growth prevention and reactive oxygen species (ROS) response regulation. Inhibits root growth. This Arabidopsis thaliana (Mouse-ear cress) protein is Serine rich endogenous peptide 23.